The following is a 629-amino-acid chain: MSVFYQYEVIVVGGGHAGTEAALAAARQGVRTLLLTHNIETLGQMSCNPAIGGIGKGHLVKEIDALGGLMAQAADQAGIHFRMLNARKGPAVRATRAQADRALYKAVVRKALEQQSCLSLFQQAVTDLVVKGERVVGVRTQLGLTFYAPAVVLTVGTFLGGRIHVGLTNHEGGRAGDPPANILSSRLRELPFRVARLKTGTPPRIDGRSIDYSQLEVQPGDDPVPVFSFLGSAEDHPQQVSCHITRTNLCTHEIIRASLDRSPIYSGEIEGIGPRYCPSIEDKVVRFSDKASHQIFIEPEGLETFEIYPNGISTSLPFDVQVALVRSIQGFEQAHITRPGYAIEYDFFDPRDLKPSLETSFLQGLYFAGQINGTTGYEEAAAQGLIAGLNAGLQVQEKEPWYPRRDEAYIGVLIDDLITCGTSEPYRMFTSRAEYRLLLREDNADLRLTPIGRELRVVDEVRWRRFNTKWKAIERENQRLVQQRIEPDKVSEGEAVTLLGEPLRREYRLIELLRRPHISYEKLMRLIGEPMAVEPAVAEQIAIQAKYAGYIERQQLEIARQQRHESLRLPLDLNYHQVRGLSVEVQEKLARVQPATLGQATRIPGVTPAAISLLLVYLKRARFLEETGV.

Position 13-18 (13-18 (GGGHAG)) interacts with FAD. NAD(+) is bound at residue 273 to 287 (GPRYCPSIEDKVVRF).

This sequence belongs to the MnmG family. In terms of assembly, homodimer. Heterotetramer of two MnmE and two MnmG subunits. FAD serves as cofactor.

It localises to the cytoplasm. Its function is as follows. NAD-binding protein involved in the addition of a carboxymethylaminomethyl (cmnm) group at the wobble position (U34) of certain tRNAs, forming tRNA-cmnm(5)s(2)U34. The chain is tRNA uridine 5-carboxymethylaminomethyl modification enzyme MnmG from Nitrosococcus oceani (strain ATCC 19707 / BCRC 17464 / JCM 30415 / NCIMB 11848 / C-107).